Reading from the N-terminus, the 376-residue chain is Dihydroorotate dehydrogenase (quinone) (376 aa).

Residues 78–82 and threonine 102 each bind FMN; that span reads AGFDK. Lysine 82 is a substrate binding site. 127 to 131 serves as a coordination point for substrate; that stretch reads NRMGF. FMN is bound by residues asparagine 157 and asparagine 190. Asparagine 190 provides a ligand contact to substrate. Serine 193 serves as the catalytic Nucleophile. Asparagine 195 contributes to the substrate binding site. FMN is bound by residues lysine 228 and threonine 256. 257-258 serves as a coordination point for substrate; that stretch reads NT. FMN is bound by residues glycine 286, glycine 315, and 336-337; that span reads YT.

Belongs to the dihydroorotate dehydrogenase family. Type 2 subfamily. As to quaternary structure, monomer. FMN serves as cofactor.

Its subcellular location is the cell membrane. The catalysed reaction is (S)-dihydroorotate + a quinone = orotate + a quinol. It participates in pyrimidine metabolism; UMP biosynthesis via de novo pathway; orotate from (S)-dihydroorotate (quinone route): step 1/1. Catalyzes the conversion of dihydroorotate to orotate with quinone as electron acceptor. This chain is Dihydroorotate dehydrogenase (quinone), found in Trichormus variabilis (strain ATCC 29413 / PCC 7937) (Anabaena variabilis).